Consider the following 228-residue polypeptide: NAD(P)H-quinone oxidoreductase subunit K, chloroplastic (228 aa).

The [4Fe-4S] cluster site is built by Cys43, Cys44, Cys108, and Cys139.

It belongs to the complex I 20 kDa subunit family. NDH is composed of at least 16 different subunits, 5 of which are encoded in the nucleus. It depends on [4Fe-4S] cluster as a cofactor.

The protein localises to the plastid. It is found in the chloroplast thylakoid membrane. The enzyme catalyses a plastoquinone + NADH + (n+1) H(+)(in) = a plastoquinol + NAD(+) + n H(+)(out). The catalysed reaction is a plastoquinone + NADPH + (n+1) H(+)(in) = a plastoquinol + NADP(+) + n H(+)(out). In terms of biological role, NDH shuttles electrons from NAD(P)H:plastoquinone, via FMN and iron-sulfur (Fe-S) centers, to quinones in the photosynthetic chain and possibly in a chloroplast respiratory chain. The immediate electron acceptor for the enzyme in this species is believed to be plastoquinone. Couples the redox reaction to proton translocation, and thus conserves the redox energy in a proton gradient. This is NAD(P)H-quinone oxidoreductase subunit K, chloroplastic from Ceratophyllum demersum (Rigid hornwort).